A 162-amino-acid polypeptide reads, in one-letter code: UPF0114 protein PA4574 (162 aa).

The next 3 helical transmembrane spans lie at 10–32 (YASRWLLAPIYMGLSLALLALTI), 53–75 (LILVLLSLIDMALVGGLLVMVMI), and 136–156 (LMWYVIIHMTFVLSAFAMGYL).

The protein belongs to the UPF0114 family.

The protein resides in the cell membrane. This chain is UPF0114 protein PA4574, found in Pseudomonas aeruginosa (strain ATCC 15692 / DSM 22644 / CIP 104116 / JCM 14847 / LMG 12228 / 1C / PRS 101 / PAO1).